A 557-amino-acid polypeptide reads, in one-letter code: Dihydroxy-acid dehydratase (557 aa).

Cysteine 50 lines the [2Fe-2S] cluster pocket. Aspartate 82 is a Mg(2+) binding site. Cysteine 123 serves as a coordination point for [2Fe-2S] cluster. Residues aspartate 124 and lysine 125 each contribute to the Mg(2+) site. Position 125 is an N6-carboxylysine (lysine 125). Cysteine 195 lines the [2Fe-2S] cluster pocket. Residue glutamate 447 participates in Mg(2+) binding. The active-site Proton acceptor is the serine 473.

The protein belongs to the IlvD/Edd family. In terms of assembly, homodimer. [2Fe-2S] cluster is required as a cofactor. The cofactor is Mg(2+).

It carries out the reaction (2R)-2,3-dihydroxy-3-methylbutanoate = 3-methyl-2-oxobutanoate + H2O. The catalysed reaction is (2R,3R)-2,3-dihydroxy-3-methylpentanoate = (S)-3-methyl-2-oxopentanoate + H2O. Its pathway is amino-acid biosynthesis; L-isoleucine biosynthesis; L-isoleucine from 2-oxobutanoate: step 3/4. The protein operates within amino-acid biosynthesis; L-valine biosynthesis; L-valine from pyruvate: step 3/4. Functions in the biosynthesis of branched-chain amino acids. Catalyzes the dehydration of (2R,3R)-2,3-dihydroxy-3-methylpentanoate (2,3-dihydroxy-3-methylvalerate) into 2-oxo-3-methylpentanoate (2-oxo-3-methylvalerate) and of (2R)-2,3-dihydroxy-3-methylbutanoate (2,3-dihydroxyisovalerate) into 2-oxo-3-methylbutanoate (2-oxoisovalerate), the penultimate precursor to L-isoleucine and L-valine, respectively. The polypeptide is Dihydroxy-acid dehydratase (Janthinobacterium sp. (strain Marseille) (Minibacterium massiliensis)).